We begin with the raw amino-acid sequence, 262 residues long: Acyl-[acyl-carrier-protein]--UDP-N-acetylglucosamine O-acyltransferase (262 aa).

Belongs to the transferase hexapeptide repeat family. LpxA subfamily. Homotrimer.

Its subcellular location is the cytoplasm. The enzyme catalyses a (3R)-hydroxyacyl-[ACP] + UDP-N-acetyl-alpha-D-glucosamine = a UDP-3-O-[(3R)-3-hydroxyacyl]-N-acetyl-alpha-D-glucosamine + holo-[ACP]. Its pathway is glycolipid biosynthesis; lipid IV(A) biosynthesis; lipid IV(A) from (3R)-3-hydroxytetradecanoyl-[acyl-carrier-protein] and UDP-N-acetyl-alpha-D-glucosamine: step 1/6. Involved in the biosynthesis of lipid A, a phosphorylated glycolipid that anchors the lipopolysaccharide to the outer membrane of the cell. The sequence is that of Acyl-[acyl-carrier-protein]--UDP-N-acetylglucosamine O-acyltransferase from Yersinia pseudotuberculosis serotype O:1b (strain IP 31758).